A 249-amino-acid polypeptide reads, in one-letter code: Probable aquaporin TIP-type (249 aa).

2 consecutive transmembrane segments (helical) span residues 22–42 and 56–76; these read AGLA…GSGI and AGLI…VSVG. Residues 85-87 carry the NPA 1 motif; the sequence is NPA. The next 3 membrane-spanning stretches (helical) occupy residues 103 to 123, 137 to 157, and 169 to 189; these read IVYI…LVFV, VGVG…VYTV, and IGII…LVGG. Residues 197 to 199 carry the NPA 2 motif; it reads NPA. Residues 217 to 237 traverse the membrane as a helical segment; that stretch reads YWAGPLIGGGIAGLVYEVLFI.

Belongs to the MIP/aquaporin (TC 1.A.8) family. TIP (TC 1.A.8.10) subfamily. As to expression, expression is highest in root tips, with slightly lower levels of hybridizing mRNA in stems, and whole roots, and much lower levels in nodules and leaves.

Its subcellular location is the membrane. In terms of biological role, aquaporins facilitate the transport of water and small neutral solutes across cell membranes. This is Probable aquaporin TIP-type (MCP1) from Medicago sativa (Alfalfa).